Reading from the N-terminus, the 408-residue chain is Hepatocyte nuclear factor 4-gamma (408 aa).

The nuclear receptor DNA-binding region spans 9–84 (NCLCAICGDR…AGMKKEAVQN (76 aa)). NR C4-type zinc fingers lie at residues 12–32 (CAIC…CDGC) and 48–72 (CRFS…LRKC). Phosphoserine is present on Ser-94. The 230-residue stretch at 99–328 (SNIPSINTLA…NLLQEMLLGG (230 aa)) folds into the NR LBD domain. The tract at residues 368-390 (ISTPETPLPSPPQGSGQEQYKIA) is disordered. Residues Thr-370 and Thr-373 each carry the phosphothreonine modification. Ser-377 carries the phosphoserine modification.

Belongs to the nuclear hormone receptor family. NR2 subfamily. In terms of tissue distribution, expressed in pancreas, kidney, small intestine and testis. Weakly expressed in colon. Not expressed in liver, skeletal muscle, lung, placenta, brain, heart, peripheral blood, ovary, prostate, thymus and spleen.

Its subcellular location is the nucleus. Functionally, transcription factor. Has a lower transcription activation potential than HNF4-alpha. The polypeptide is Hepatocyte nuclear factor 4-gamma (HNF4G) (Homo sapiens (Human)).